We begin with the raw amino-acid sequence, 120 residues long: Anti-adapter protein IraM (120 aa).

The protein belongs to the IraM/RssC family.

The protein localises to the cytoplasm. In terms of biological role, involved in the stabilization of the sigma stress factor RpoS. The sequence is that of Anti-adapter protein IraM from Salmonella typhimurium (strain LT2 / SGSC1412 / ATCC 700720).